The primary structure comprises 273 residues: Large ribosomal subunit protein uL2cz/uL2cy (273 aa).

Disordered stretches follow at residues 1 to 25 (MAIH…VKSN) and 224 to 273 (NPVD…RRRK).

Belongs to the universal ribosomal protein uL2 family. In terms of assembly, part of the 50S ribosomal subunit.

It is found in the plastid. It localises to the chloroplast. The sequence is that of Large ribosomal subunit protein uL2cz/uL2cy (rpl2-A) from Phalaenopsis aphrodite subsp. formosana (Moth orchid).